The chain runs to 200 residues: UPF0329 protein ECU06_1670 (200 aa).

This sequence belongs to the UPF0329 family.

The protein is UPF0329 protein ECU06_1670 of Encephalitozoon cuniculi (strain GB-M1) (Microsporidian parasite).